Reading from the N-terminus, the 338-residue chain is Anthranilate phosphoribosyltransferase (338 aa).

5-phospho-alpha-D-ribose 1-diphosphate-binding positions include Gly-80, 83–84 (GD), Thr-88, 90–93 (NIST), 108–116 (KHGNRAVSS), and Ser-120. Gly-80 serves as a coordination point for anthranilate. Ser-92 is a binding site for Mg(2+). Asn-111 provides a ligand contact to anthranilate. Residue Arg-166 coordinates anthranilate. 2 residues coordinate Mg(2+): Asp-225 and Glu-226.

Belongs to the anthranilate phosphoribosyltransferase family. In terms of assembly, homodimer. The cofactor is Mg(2+).

It carries out the reaction N-(5-phospho-beta-D-ribosyl)anthranilate + diphosphate = 5-phospho-alpha-D-ribose 1-diphosphate + anthranilate. It functions in the pathway amino-acid biosynthesis; L-tryptophan biosynthesis; L-tryptophan from chorismate: step 2/5. Its function is as follows. Catalyzes the transfer of the phosphoribosyl group of 5-phosphorylribose-1-pyrophosphate (PRPP) to anthranilate to yield N-(5'-phosphoribosyl)-anthranilate (PRA). The chain is Anthranilate phosphoribosyltransferase from Thermoanaerobacter sp. (strain X514).